Consider the following 317-residue polypeptide: Malate dehydrogenase (317 aa).

Residues 10-15 and Asp34 each bind NAD(+); that span reads GGGQIG. Arg83 and Arg89 together coordinate substrate. NAD(+)-binding positions include Asn96 and 119–121; that span reads ISN. Residues Asn121 and Arg152 each coordinate substrate. His176 serves as the catalytic Proton acceptor.

Belongs to the LDH/MDH superfamily. MDH type 3 family.

It catalyses the reaction (S)-malate + NAD(+) = oxaloacetate + NADH + H(+). Catalyzes the reversible oxidation of malate to oxaloacetate. The polypeptide is Malate dehydrogenase (Geobacter metallireducens (strain ATCC 53774 / DSM 7210 / GS-15)).